We begin with the raw amino-acid sequence, 159 residues long: Eukaryotic translation initiation factor 5A-2 (159 aa).

The span at 1–12 shows a compositional bias: basic and acidic residues; sequence MSDEEHQFESKA. Residues 1–23 form a disordered region; the sequence is MSDEEHQFESKADAGASKTYPQQ. A Hypusine modification is found at K52.

The protein belongs to the eIF-5A family. In terms of processing, lys-52 undergoes hypusination, a unique post-translational modification that consists in the addition of a butylamino group from spermidine to lysine side chain, leading to the formation of the unusual amino acid hypusine. eIF-5As are the only known proteins to undergo this modification, which is essential for their function.

In terms of biological role, translation factor that promotes translation elongation and termination, particularly upon ribosome stalling at specific amino acid sequence contexts. Binds between the exit (E) and peptidyl (P) site of the ribosome and promotes rescue of stalled ribosome: specifically required for efficient translation of polyproline-containing peptides as well as other motifs that stall the ribosome. Acts as a ribosome quality control (RQC) cofactor by joining the RQC complex to facilitate peptidyl transfer during CAT tailing step. The protein is Eukaryotic translation initiation factor 5A-2 (EIF-5A2) of Nicotiana plumbaginifolia (Leadwort-leaved tobacco).